A 382-amino-acid polypeptide reads, in one-letter code: Mannitol-1-phosphate 5-dehydrogenase (382 aa).

Residue 3–14 coordinates NAD(+); that stretch reads ALHFGAGNIGRG. At K269 the chain carries N6-acetyllysine.

Belongs to the mannitol dehydrogenase family.

The enzyme catalyses D-mannitol 1-phosphate + NAD(+) = beta-D-fructose 6-phosphate + NADH + H(+). This chain is Mannitol-1-phosphate 5-dehydrogenase, found in Escherichia coli O45:K1 (strain S88 / ExPEC).